The chain runs to 514 residues: Intracellular exo-alpha-L-arabinofuranosidase (514 aa).

Residues E47 and N194 each coordinate alpha-L-arabinofuranose. E195 acts as the Proton donor/acceptor in catalysis. Residues Y261, E317, and Q366 each coordinate alpha-L-arabinofuranose. E317 serves as the catalytic Nucleophile.

It belongs to the glycosyl hydrolase 51 family. In terms of assembly, homohexamer; trimer of dimers.

Its subcellular location is the cytoplasm. It carries out the reaction Hydrolysis of terminal non-reducing alpha-L-arabinofuranoside residues in alpha-L-arabinosides.. It participates in glycan metabolism; L-arabinan degradation. Functionally, involved in the degradation of arabinan and is a key enzyme in the complete degradation of the plant cell wall. Catalyzes the cleavage of terminal alpha-L-arabinofuranosyl residues in different hemicellulosic homopolysaccharides (branched and debranched arabinans) and heteropolysaccharides (arabinoxylans). This Bacteroides ovatus protein is Intracellular exo-alpha-L-arabinofuranosidase (asdII).